Here is a 167-residue protein sequence, read N- to C-terminus: Ribosome maturation factor RimM (167 aa).

The 75-residue stretch at 92-166 (DDEFYHADLI…RIVADPPEEQ (75 aa)) folds into the PRC barrel domain.

Belongs to the RimM family. In terms of assembly, binds ribosomal protein uS19.

The protein resides in the cytoplasm. Its function is as follows. An accessory protein needed during the final step in the assembly of 30S ribosomal subunit, possibly for assembly of the head region. Essential for efficient processing of 16S rRNA. May be needed both before and after RbfA during the maturation of 16S rRNA. It has affinity for free ribosomal 30S subunits but not for 70S ribosomes. This chain is Ribosome maturation factor RimM, found in Paracoccus denitrificans (strain Pd 1222).